A 314-amino-acid chain; its full sequence is NADH-ubiquinone oxidoreductase chain 2 (314 aa).

The next 9 helical transmembrane spans lie at 13-35 (LGVM…VWLG), 61-80 (YFVV…VSLM), 85-107 (VSGL…LHSW), 117-139 (WLAS…SMIL), 144-166 (LWVV…NSVR), 189-209 (VVFV…FYGC), 224-244 (AASG…GFLA), 246-266 (VLVF…GSVI), and 294-314 (IWSL…VSFI).

This sequence belongs to the complex I subunit 2 family.

Its subcellular location is the mitochondrion inner membrane. It catalyses the reaction a ubiquinone + NADH + 5 H(+)(in) = a ubiquinol + NAD(+) + 4 H(+)(out). Its function is as follows. Core subunit of the mitochondrial membrane respiratory chain NADH dehydrogenase (Complex I) that is believed to belong to the minimal assembly required for catalysis. Complex I functions in the transfer of electrons from NADH to the respiratory chain. The immediate electron acceptor for the enzyme is believed to be ubiquinone. The chain is NADH-ubiquinone oxidoreductase chain 2 (ND2) from Mytilus edulis (Blue mussel).